Reading from the N-terminus, the 482-residue chain is Aspartyl/glutamyl-tRNA(Asn/Gln) amidotransferase subunit B (482 aa).

The protein belongs to the GatB/GatE family. GatB subfamily. As to quaternary structure, heterotrimer of A, B and C subunits.

The enzyme catalyses L-glutamyl-tRNA(Gln) + L-glutamine + ATP + H2O = L-glutaminyl-tRNA(Gln) + L-glutamate + ADP + phosphate + H(+). It catalyses the reaction L-aspartyl-tRNA(Asn) + L-glutamine + ATP + H2O = L-asparaginyl-tRNA(Asn) + L-glutamate + ADP + phosphate + 2 H(+). In terms of biological role, allows the formation of correctly charged Asn-tRNA(Asn) or Gln-tRNA(Gln) through the transamidation of misacylated Asp-tRNA(Asn) or Glu-tRNA(Gln) in organisms which lack either or both of asparaginyl-tRNA or glutaminyl-tRNA synthetases. The reaction takes place in the presence of glutamine and ATP through an activated phospho-Asp-tRNA(Asn) or phospho-Glu-tRNA(Gln). This Thermotoga petrophila (strain ATCC BAA-488 / DSM 13995 / JCM 10881 / RKU-1) protein is Aspartyl/glutamyl-tRNA(Asn/Gln) amidotransferase subunit B.